A 388-amino-acid chain; its full sequence is Succinate--CoA ligase [ADP-forming] subunit beta (388 aa).

Positions 9–244 (KQLFARYGLP…QSQEDPREAQ (236 aa)) constitute an ATP-grasp domain. ATP-binding positions include Lys-46, 53 to 55 (GRG), Glu-99, Thr-102, and Glu-107. Mg(2+) contacts are provided by Asn-199 and Asp-213. Substrate contacts are provided by residues Asn-264 and 321–323 (GIV).

This sequence belongs to the succinate/malate CoA ligase beta subunit family. As to quaternary structure, heterotetramer of two alpha and two beta subunits. Mg(2+) is required as a cofactor.

It catalyses the reaction succinate + ATP + CoA = succinyl-CoA + ADP + phosphate. The catalysed reaction is GTP + succinate + CoA = succinyl-CoA + GDP + phosphate. It participates in carbohydrate metabolism; tricarboxylic acid cycle; succinate from succinyl-CoA (ligase route): step 1/1. In terms of biological role, succinyl-CoA synthetase functions in the citric acid cycle (TCA), coupling the hydrolysis of succinyl-CoA to the synthesis of either ATP or GTP and thus represents the only step of substrate-level phosphorylation in the TCA. The beta subunit provides nucleotide specificity of the enzyme and binds the substrate succinate, while the binding sites for coenzyme A and phosphate are found in the alpha subunit. The sequence is that of Succinate--CoA ligase [ADP-forming] subunit beta from Shigella dysenteriae serotype 1 (strain Sd197).